The primary structure comprises 299 residues: Oxygen-dependent coproporphyrinogen-III oxidase (299 aa).

Serine 92 is a binding site for substrate. A divalent metal cation is bound by residues histidine 96 and histidine 106. The active-site Proton donor is histidine 106. 108 to 110 provides a ligand contact to substrate; sequence NVR. Residues histidine 145 and histidine 175 each coordinate a divalent metal cation. The important for dimerization stretch occupies residues 240 to 275; it reads YVEFNLVWDRGTLFGLQTGGRTESILMSMPPLVRWE. 258–260 lines the substrate pocket; that stretch reads GGR.

Belongs to the aerobic coproporphyrinogen-III oxidase family. Homodimer. Requires a divalent metal cation as cofactor.

It localises to the cytoplasm. It catalyses the reaction coproporphyrinogen III + O2 + 2 H(+) = protoporphyrinogen IX + 2 CO2 + 2 H2O. The protein operates within porphyrin-containing compound metabolism; protoporphyrin-IX biosynthesis; protoporphyrinogen-IX from coproporphyrinogen-III (O2 route): step 1/1. Involved in the heme biosynthesis. Catalyzes the aerobic oxidative decarboxylation of propionate groups of rings A and B of coproporphyrinogen-III to yield the vinyl groups in protoporphyrinogen-IX. The protein is Oxygen-dependent coproporphyrinogen-III oxidase of Salmonella arizonae (strain ATCC BAA-731 / CDC346-86 / RSK2980).